The primary structure comprises 43 residues: Protein PsbN (43 aa).

Residues 7 to 29 (LSIALAAVCIGVTGYSIYLSFGP) form a helical membrane-spanning segment.

The protein belongs to the PsbN family.

The protein localises to the cellular thylakoid membrane. May play a role in photosystem I and II biogenesis. This chain is Protein PsbN, found in Thermosynechococcus vestitus (strain NIES-2133 / IAM M-273 / BP-1).